The primary structure comprises 391 residues: Candidapepsin-1 (391 aa).

A signal peptide spans 1-18 (MFLKNIFIALAIALLVDA). Residues 19 to 50 (SPAKRSPGFVTLDFDVIKTPVNATGQEGKVKR) constitute a propeptide, activation peptide. N40 carries an N-linked (GlcNAc...) asparagine glycan. Positions 64 to 377 (YAADITIGSN…DLDDDKISLA (314 aa)) constitute a Peptidase A1 domain. D82 is a catalytic residue. A disulfide bridge links C97 with C109. D267 is a catalytic residue. An intrachain disulfide couples C305 to C343.

The protein belongs to the peptidase A1 family. O-glycosylated.

It localises to the secreted. The enzyme catalyses Preferential cleavage at the carboxyl of hydrophobic amino acids, but fails to cleave 15-Leu-|-Tyr-16, 16-Tyr-|-Leu-17 and 24-Phe-|-Phe-25 of insulin B chain. Activates trypsinogen, and degrades keratin.. In Candida albicans (strain WO-1) (Yeast), this protein is Candidapepsin-1 (SAP1).